We begin with the raw amino-acid sequence, 153 residues long: Movement protein (153 aa).

A disordered region spans residues Ser-107–Arg-153.

Belongs to the luteoviruses movement protein family.

Functionally, transports viral genome to neighboring plant cells directly through plasmosdesmata, without any budding. The movement protein allows efficient cell to cell propagation, by bypassing the host cell wall barrier. The protein is Movement protein of Avena byzantina (Oat).